A 223-amino-acid polypeptide reads, in one-letter code: Ribose-5-phosphate isomerase A (223 aa).

Substrate-binding positions include 32 to 35, 85 to 88, and 98 to 101; these read TGST, DGAD, and KGGG. Residue Glu107 is the Proton acceptor of the active site. A substrate-binding site is contributed by Lys125.

Belongs to the ribose 5-phosphate isomerase family. As to quaternary structure, homodimer.

The enzyme catalyses aldehydo-D-ribose 5-phosphate = D-ribulose 5-phosphate. The protein operates within carbohydrate degradation; pentose phosphate pathway; D-ribose 5-phosphate from D-ribulose 5-phosphate (non-oxidative stage): step 1/1. Its function is as follows. Catalyzes the reversible conversion of ribose-5-phosphate to ribulose 5-phosphate. The chain is Ribose-5-phosphate isomerase A from Stutzerimonas stutzeri (strain A1501) (Pseudomonas stutzeri).